Here is a 245-residue protein sequence, read N- to C-terminus: MALQQIVEPIVTGLGYALVEIERSAGGLLRVTIDLPWPAPNGAAAEPAPDGALALEPAPSGAGTLDTAPDGATALETVPSGATALETAPNGAVSTPAQSVTLEDCEKVTRQLQFALEVDGVQYQRLEVASPGIDRPLRGEQDLLRFAGSVIDITLKAPIGGAAAGKVGATRKKFRGTLERTASGGWQIVWSDAPPPKPGQRVGKKRLPAPLQALGFSLDEVRDMRLAPIVDFKGRTGKAGAAPAG.

It belongs to the RimP family.

Its subcellular location is the cytoplasm. Required for maturation of 30S ribosomal subunits. The polypeptide is Ribosome maturation factor RimP (Verminephrobacter eiseniae (strain EF01-2)).